The sequence spans 127 residues: Small ribosomal subunit protein bS6 (127 aa).

Residues 106 to 117 (ERKAQSEKKEAE) show a composition bias toward basic and acidic residues. The tract at residues 106-127 (ERKAQSEKKEAEVSEGEGGTEA) is disordered. Acidic residues predominate over residues 118 to 127 (VSEGEGGTEA).

The protein belongs to the bacterial ribosomal protein bS6 family.

Binds together with bS18 to 16S ribosomal RNA. The sequence is that of Small ribosomal subunit protein bS6 from Thermotoga neapolitana (strain ATCC 49049 / DSM 4359 / NBRC 107923 / NS-E).